Reading from the N-terminus, the 86-residue chain is Chymotrypsin inhibitor (86 aa).

An N-terminal signal peptide occupies residues 1–16 (MKTLCIFLVLVVAVAA). Disulfide bonds link Cys-26–Cys-58, Cys-38–Cys-50, Cys-42–Cys-82, and Cys-60–Cys-76. Residues 26–82 (CPPNKEFGSYGDCPPSCLKNPPNFCTLKLNYGCKCKEGYVLTRYQDYESDCIKPEEC) form the TIL domain.

It belongs to the serine protease inhibitor-like (TIL domain-containing) family. Only expressed in fat body.

Its subcellular location is the secreted. Serine protease inhibitor that inhibits chymotrypsin (IC(50)=34.13 nM, Ki=49.85 nM), microbial serine proteases (subtilisin A (IC(50)=21.31 nM, Ki=20.51 nM) and proteinase K (IC(50)=52.56 nM, Ki=65.42 nM)), as well as human neutrophil elastase (IC(50)=11.54 nM, Ki=8.74 nM), and porcine pancreatic elastase (IC(50)=19.07 nM, Ki=11.32 nM). The sequence is that of Chymotrypsin inhibitor from Araneus ventricosus (Orbweaver spider).